Reading from the N-terminus, the 338-residue chain is Heat-inducible transcription repressor HrcA (338 aa).

It belongs to the HrcA family.

Its function is as follows. Negative regulator of class I heat shock genes (grpE-dnaK-dnaJ and groELS operons). Prevents heat-shock induction of these operons. This is Heat-inducible transcription repressor HrcA from Streptomyces avermitilis (strain ATCC 31267 / DSM 46492 / JCM 5070 / NBRC 14893 / NCIMB 12804 / NRRL 8165 / MA-4680).